The primary structure comprises 240 residues: Predicted GPI-anchored protein 58 (240 aa).

The N-terminal stretch at 1 to 18 is a signal peptide; the sequence is MQFSTLVSLAAVIVSTNA. The tract at residues 41–216 is disordered; sequence HTNCPASSPA…NSTGPSSVPT (176 aa). The segment covering 51-86 has biased composition (pro residues); it reads TPAPAPSASAPAPPAPEQPEPSAPAPAPSAPAPEQP. A compositionally biased stretch (low complexity) spans 87-103; it reads EQPATPATPAAPATPAT. Composition is skewed to pro residues over residues 104–137 and 153–192; these read PAAPEPSAPAPEQPASPAAPAPAPSAPAPAPEQP and APAPSAPAPPAPEQPESAPAPAPSAPAPEQPESSPAPAPS. Residues 193–216 show a composition bias toward low complexity; that stretch reads APASVPEQPASSVSNSTGPSSVPT. N-linked (GlcNAc...) asparagine glycosylation is present at Asn207. Gly219 carries GPI-anchor amidated glycine lipidation. A propeptide spans 220 to 240 (removed in mature form); it reads AAAKQYITGSVAVIAAALLAL.

The protein resides in the cell membrane. The protein is Predicted GPI-anchored protein 58 (PGA58) of Candida albicans (strain SC5314 / ATCC MYA-2876) (Yeast).